The sequence spans 302 residues: 4-hydroxy-tetrahydrodipicolinate synthase (302 aa).

A pyruvate-binding site is contributed by threonine 56. The active-site Proton donor/acceptor is tyrosine 145. Residue lysine 173 is the Schiff-base intermediate with substrate of the active site. Valine 215 is a pyruvate binding site.

The protein belongs to the DapA family. Homotetramer; dimer of dimers.

The protein localises to the cytoplasm. It catalyses the reaction L-aspartate 4-semialdehyde + pyruvate = (2S,4S)-4-hydroxy-2,3,4,5-tetrahydrodipicolinate + H2O + H(+). Its pathway is amino-acid biosynthesis; L-lysine biosynthesis via DAP pathway; (S)-tetrahydrodipicolinate from L-aspartate: step 3/4. Its function is as follows. Catalyzes the condensation of (S)-aspartate-beta-semialdehyde [(S)-ASA] and pyruvate to 4-hydroxy-tetrahydrodipicolinate (HTPA). The sequence is that of 4-hydroxy-tetrahydrodipicolinate synthase from Prochlorococcus marinus (strain MIT 9515).